The primary structure comprises 818 residues: Sodium/hydrogen exchanger 1 (818 aa).

At 1 to 98 (MLLWPGASGL…FPVLGIDYQH (98 aa)) the chain is on the extracellular side. The disordered stretch occupies residues 44–76 (STIRGSEPPRERSIGDVTTAPPELAPESRPVNH). The N-linked (GlcNAc...) asparagine glycan is linked to Asn75. Residues 99–121 (VRIPFEIALWILLACLMKIGFHV) traverse the membrane as a helical segment. The Cytoplasmic segment spans residues 122-130 (IPTISSIVP). Residues 131-148 (ESCLLIVVGLLVGGLIKG) form a helical membrane-spanning segment. Over 149–158 (VGETPPILQS) the chain is Extracellular. The chain crosses the membrane as a helical span at residues 159-176 (EVFFLFLLPPIILDAGYF). Over 177-186 (LPLRQFTENL) the chain is Cytoplasmic. The chain crosses the membrane as a helical span at residues 187 to 215 (GTILIFAVVGTLWNAFFLGGLMYAVCLVG). Residues 216 to 222 (GEQINNI) are Extracellular-facing. A helical transmembrane segment spans residues 223–249 (GLLENLLFGSIISAVDPVAVLAVFEEI). The Cytoplasmic segment spans residues 250–252 (HIN). A helical membrane pass occupies residues 253–283 (ELLHILVFGESLLNDAVTVVLYHLFEEFANY). At 284-287 (DRVG) the chain is on the extracellular side. Residues 288–322 (IVDIILGFLSFFVVSLGGVFVGVVYGVIAAFTSRF) traverse the membrane as a helical segment. Topologically, residues 323–328 (TSHIRV) are cytoplasmic. The helical transmembrane segment at 329-341 (IEPLFVFLYSYMA) threads the bilayer. Residues 342 to 350 (YLSAELFHL) lie on the Extracellular side of the membrane. The helical transmembrane segment at 351-371 (SGIMALIASGVVMRPYVEANI) threads the bilayer. The Cytoplasmic portion of the chain corresponds to 372-373 (SH). The helical transmembrane segment at 374 to 404 (KSHTTIKYFLKMWSSVSETLIFIFLGVSTVA) threads the bilayer. Residues 405–410 (GSHHWN) lie on the Extracellular side of the membrane. A helical transmembrane segment spans residues 411-438 (WTFVISTLLFCLIARVLGVLGLTWFINK). At 439-444 (FRIVKL) the chain is on the cytoplasmic side. Residues 445–469 (TPKDQFIIAYGGLRGAIAFSLGYLL) form a helical membrane-spanning segment. The Extracellular portion of the chain corresponds to 470–475 (DKKHFP). A helical membrane pass occupies residues 476–505 (MCDLFLTAIITVIFFTVFVQGMTIRPLVDL). The interaction with TESC stretch occupies residues 503–545 (VDLLAVKKKQETKRSINEEIHTQFLDHLLTGIEDICGHYGHHH). At 506-818 (LAVKKKQETK…EGEPFIPKGQ (313 aa)) the chain is on the cytoplasmic side. Residues 509–516 (KKKQETKR) are PI(4,5)P2-binding region. The segment at 515–545 (KRSINEEIHTQFLDHLLTGIEDICGHYGHHH) is interaction with CHP2. The tract at residues 540 to 545 (HYGHHH) is confers pH-dependent PI(4,5)P2 binding. Residues 552–560 (RFNKKYVKK) are PI(4,5)P2-binding region. Ser599 and Ser602 each carry phosphoserine. Thr603 is subject to Phosphothreonine. Residues Ser605 and Ser648 each carry the phosphoserine modification. The tract at residues 633-818 (KILRNNLQKT…EGEPFIPKGQ (186 aa)) is interaction with TESC. The interaction with CALM1 stretch occupies residues 633-818 (KILRNNLQKT…EGEPFIPKGQ (186 aa)). The tract at residues 684–687 (LTVP) is interaction with PPP3CA. Phosphoserine is present on residues Ser693, Ser697, and Ser703. Residues 715–720 (PVITID) form an interaction with PPP3CA region. Phosphoserine occurs at positions 723, 726, and 729. The segment at 741-818 (VLGLSRDPGR…EGEPFIPKGQ (78 aa)) is disordered. Thr782 carries the post-translational modification Phosphothreonine. The segment covering 785–794 (PSDSPSSQRI) has biased composition (polar residues). Residues Ser788, Ser790, and Ser799 each carry the phosphoserine modification.

The protein belongs to the monovalent cation:proton antiporter 1 (CPA1) transporter (TC 2.A.36) family. Homodimer; dimerization is crucial for its function. Oligomer. Interacts with CALM in a calcium-dependent manner. Interacts with TESC. Interacts (via the juxtamembrane region of the cytoplasmic C-terminal domain) with CHP1; the interaction occurs at the plasma membrane in a calcium-dependent manner. Interacts with CHP2; the interaction occurs in a calcium-dependent manner. Interacts with EZR; regulates the cytoskeletal interactions of SLC9A1 and promotes stress fiber formation. Post-translationally, ubiquitinated, leading to its degradation by the proteasome. Ubiquitination is reduced by CHP1. O-glycosylated. In terms of processing, palmitoylated; may play a major role in SLC9A1 regulation. Post-translationally, phosphorylation at Thr-782 increases SLC9A1 activity. Specifically dephosphorylated at Thr-782 by PPP3CA that negatively regulates SLC9A1 activity. Phosphorylation at Ser-648 by AKT1 reduces SLC9A1 binding to CALM1.

It is found in the cell membrane. The protein resides in the basolateral cell membrane. The catalysed reaction is Na(+)(in) + H(+)(out) = Na(+)(out) + H(+)(in). The enzyme catalyses Li(+)(out) + H(+)(in) = Li(+)(in) + H(+)(out). It catalyses the reaction Li(+)(in) + Na(+)(out) = Li(+)(out) + Na(+)(in). With respect to regulation, activated at acidic pHs. Inhibited by amiloride and 5-amino-substituted derivatives. Inhibited by cariporide and eniporide. Phosphatidylinositol 4,5-bisphosphate (PI(4,5)P2) and phosphatidylinositol 3,4,5-trisphosphate (PI(3,4,5)P3) bind and differentially regulate SLC9A1 activity. In terms of biological role, electroneutral Na(+) /H(+) antiporter that extrudes Na(+) in exchange for external protons driven by the inward sodium ion chemical gradient, protecting cells from acidification that occurs from metabolism. Exchanges intracellular H(+) ions for extracellular Na(+) in 1:1 stoichiometry. Plays a key role in maintening intracellular pH neutral and cell volume, and thus is important for cell growth, proliferation, migration and survival. In addition, can transport lithium Li(+) and also functions as a Na(+)/Li(+) antiporter. SLC9A1 also functions in membrane anchoring and organization of scaffolding complexes that coordinate signaling inputs. This chain is Sodium/hydrogen exchanger 1 (SLC9A1), found in Bos taurus (Bovine).